Reading from the N-terminus, the 208-residue chain is Transcription factor atf-4 homolog (208 aa).

2 disordered regions span residues 18–47 and 106–165; these read HNQTHSTPQYHNHHHHHHQSPTYPQSYFNP and ERRS…EKEE. Residues 110–120 show a composition bias toward low complexity; it reads NSSASPASNWS. The segment covering 121–141 has biased composition (basic and acidic residues); that stretch reads SDEHDSQSEKSYHPYKTPEKK. One can recognise a bZIP domain in the interval 138–201; it reads PEKKERKKAQ…RYFKKFMTEM (64 aa). Residues 140 to 163 are basic motif; it reads KKERKKAQNRLAATRYREKKRREK. The leucine-zipper stretch occupies residues 173–187; sequence LSVTNGKLKDQVSEL.

Belongs to the bZIP family.

The protein resides in the nucleus. Functionally, transcription factor. Involved in positively modulating longevity and stress tolerance, probably acting by positively regulating expression of transsulfuration enzyme cth-2, leading to increased hydrogen sulfide production and therefore increased protein persulfidation, a protective modification of redox-reactive cysteines. May mediate longevity and increased stress resistance induced by mTORC1 suppression. This Caenorhabditis elegans protein is Transcription factor atf-4 homolog.